Here is a 1100-residue protein sequence, read N- to C-terminus: Sorbin and SH3 domain-containing protein 2 (1100 aa).

A phosphoserine mark is found at Tyr-13, Ser-14, His-27, Gly-28, Ser-30, and Ser-43. Polar residues predominate over residues 30 to 52; it reads SLDSTDTYPQHAQSLDGTTSSSI. Residues 30–57 are disordered; the sequence is SLDSTDTYPQHAQSLDGTTSSSIPLYRS. The 62-residue stretch at 66-127 folds into the SoHo domain; sequence VIKAPHYPGI…YNTPYTYNAG (62 aa). The span at 134–147 shows a compositional bias: polar residues; it reads SAQSHPAAKTQTYR. Residues 134–311 form a disordered region; that stretch reads SAQSHPAAKT…SPSRAKGGDD (178 aa). His-153 carries the alanine amide modification. Phosphoserine is present on residues Ser-154 and Ser-157. The span at 167–180 shows a compositional bias: pro residues; it reads PVPPPHVPPPVPPL. Positions 181–217 are enriched in basic and acidic residues; the sequence is RPRDRSSTEKHDWDPPDRKVDTRKFRSEPRSIFEYEP. Residues Ser-234 and Ile-236 each carry the phosphothreonine modification. 6 positions are modified to phosphoserine: Ser-239, Ser-245, Ser-248, Lys-258, Ser-259, and Glu-260. Residues Thr-277, Gly-280, and Val-282 each carry the phosphothreonine modification. Residue Ser-287 is modified to Phosphoserine. Residues 287–304 are compositionally biased toward low complexity; the sequence is SSTTLTKSFTSSSPSSPS. A Phosphothreonine modification is found at Thr-292. 10 positions are modified to phosphoserine: Phe-295, Ser-297, Ser-298, Ser-299, Ser-301, Ser-302, Ser-304, Ala-306, Asp-311, and Pro-316. Phosphothreonine occurs at positions 320, 322, and 326. His-341, Val-344, and Arg-346 each carry phosphoserine. Glu-366 is modified (phosphothreonine). Phosphoserine occurs at positions 381 and 383. Asp-413 and Lys-415 each carry phosphothreonine. A phosphoserine mark is found at Arg-437 and Arg-439. Phosphothreonine is present on Ile-459. A phosphoserine mark is found at Lys-474, Ser-494, Ser-497, Ser-550, and Ser-750. Positions 807–866 are disordered; sequence RMPRSASFQDVDTANSSCHHQDRGGALQDRESPRSYSSTLTDMGRSAPRERRGTPEKEKL. Residues 812-824 are compositionally biased toward polar residues; sequence ASFQDVDTANSSC. Residues 825–839 show a composition bias toward basic and acidic residues; the sequence is HHQDRGGALQDRESP. Ser-843 is subject to Phosphoserine. The span at 853–866 shows a compositional bias: basic and acidic residues; the sequence is APRERRGTPEKEKL. SH3 domains are found at residues 863–922 and 938–999; these read KEKL…KLTP and GEIG…VVKK. Phosphoserine occurs at positions 1017 and 1023. The SH3 3 domain maps to 1041-1100; that stretch reads GGGEPFQALYNYTPRNEDELELRESDVIDVMEKCDDGWFVGTSRRTKFFGTFPGNYVKRL.

As to quaternary structure, interacts with ABL, CBL, DNM1, DNM2, FLOT1, AFDN, PTK2B/PYK2, SAPAP, SPTAN1, SYNJ1, SYNJ2, VCL/vinculin and WASF. Interacts with ABL1/c-Abl, ABL2/v-Abl/Arg, ACTN, CBL and PALLD. Interacts with PTPN12 and WASF1 via its SH3 domains; this interaction may mediate the partial PTPN12 and WASF1 translocation to focal adhesion sites. Post-translationally, ubiquitinated by CBL. In terms of processing, dephosphorylated by PTPN12. In terms of tissue distribution, abundantly expressed in heart. In cardiac muscle cells, located in the Z-disks of sarcomere. Also found, but to a lower extent, in small and large intestine, pancreas, thymus, colon, spleen, prostate, testis, brain, ovary and epithelial cells. In the pancreas, mainly expressed in acinar cells, duct cells and all cell types in islets (at protein level). Tends to be down-regulated in pancreatic adenocarcinomas ans metastases.

The protein localises to the cytoplasm. The protein resides in the perinuclear region. It is found in the apical cell membrane. Its subcellular location is the cell junction. It localises to the focal adhesion. The protein localises to the cell projection. The protein resides in the lamellipodium. Adapter protein that plays a role in the assembling of signaling complexes, being a link between ABL kinases and actin cytoskeleton. Can form complex with ABL1 and CBL, thus promoting ubiquitination and degradation of ABL1. May play a role in the regulation of pancreatic cell adhesion, possibly by acting on WASF1 phosphorylation, enhancing phosphorylation by ABL1, as well as dephosphorylation by PTPN12. Isoform 6 increases water and sodium absorption in the intestine and gall-bladder. The polypeptide is Sorbin and SH3 domain-containing protein 2 (SORBS2) (Homo sapiens (Human)).